The sequence spans 762 residues: Endonuclease MutS2 (762 aa).

Position 333–340 (333–340 (GVNAGGKT)) interacts with ATP. The Smr domain maps to 688 to 762 (LDLRGQRSEE…GGSGVKIVKL (75 aa)).

Belongs to the DNA mismatch repair MutS family. MutS2 subfamily. Homodimer. Binds to stalled ribosomes, contacting rRNA.

Its function is as follows. Endonuclease that is involved in the suppression of homologous recombination and thus may have a key role in the control of bacterial genetic diversity. In terms of biological role, acts as a ribosome collision sensor, splitting the ribosome into its 2 subunits. Detects stalled/collided 70S ribosomes which it binds and splits by an ATP-hydrolysis driven conformational change. Acts upstream of the ribosome quality control system (RQC), a ribosome-associated complex that mediates the extraction of incompletely synthesized nascent chains from stalled ribosomes and their subsequent degradation. Probably generates substrates for RQC. The polypeptide is Endonuclease MutS2 (Helicobacter pylori (strain J99 / ATCC 700824) (Campylobacter pylori J99)).